The chain runs to 382 residues: MSLKEKTQSLFANAFGYPATHTIQAPGRVNLIGEHTDYNDGFVLPCAIDYQTVISCAPRDDRKVRVMAADYENQLDEFSLNAPIVAHENYQWANYVRGVVKHLQLRNNSFGGVDMVISGNVPQGAGLSSSASLEVAVGTVLQQLYHLPLDGAQIALNGQEAENQFVGCNCGIMDQLISALGKKDHALLIDCRSLGTKAVSMPKGVAVVIINSNFKRTLVGSEYNTRREQCETGARFFQQPALRDVTIEEFNAVAHELDPIVAKRVRHILTENARTVEAASALEQGDLKRMGELMAESHASMRDDFEITVPQIDTLVEIVKAVIGDKGGVRMTGGGFGGCIVALIPEELVPAVQQAVAEQYEAKTGIKETFYVCKPSQGAGQC.

A substrate-binding site is contributed by 34-37; the sequence is EHTD. Residue 124–130 participates in ATP binding; sequence GAGLSSS. Residues Ser130 and Glu162 each contribute to the Mg(2+) site. Asp174 functions as the Proton acceptor in the catalytic mechanism. Tyr223 is a binding site for substrate.

It belongs to the GHMP kinase family. GalK subfamily.

Its subcellular location is the cytoplasm. It catalyses the reaction alpha-D-galactose + ATP = alpha-D-galactose 1-phosphate + ADP + H(+). Its pathway is carbohydrate metabolism; galactose metabolism. Catalyzes the transfer of the gamma-phosphate of ATP to D-galactose to form alpha-D-galactose-1-phosphate (Gal-1-P). The protein is Galactokinase of Shigella flexneri.